We begin with the raw amino-acid sequence, 325 residues long: Release factor glutamine methyltransferase (325 aa).

S-adenosyl-L-methionine-binding positions include 141-145 (GTGSG), Asp-164, Trp-193, and Asn-207. 207 to 210 (NPPY) is a binding site for substrate. The segment at 306-325 (LPPIHIDAKPSAPGNGPTKA) is disordered.

It belongs to the protein N5-glutamine methyltransferase family. PrmC subfamily.

The catalysed reaction is L-glutaminyl-[peptide chain release factor] + S-adenosyl-L-methionine = N(5)-methyl-L-glutaminyl-[peptide chain release factor] + S-adenosyl-L-homocysteine + H(+). Its function is as follows. Methylates the class 1 translation termination release factors RF1/PrfA and RF2/PrfB on the glutamine residue of the universally conserved GGQ motif. The chain is Release factor glutamine methyltransferase from Rhodospirillum rubrum (strain ATCC 11170 / ATH 1.1.1 / DSM 467 / LMG 4362 / NCIMB 8255 / S1).